Consider the following 607-residue polypeptide: Fucose-1-phosphate guanylyltransferase (607 aa).

The segment at 1–21 is disordered; the sequence is MRAVRRGLREGGAMAAARDPP.

As to expression, expressed in many tissues.

It is found in the cytoplasm. The enzyme catalyses beta-L-fucose 1-phosphate + GTP + H(+) = GDP-beta-L-fucose + diphosphate. Its function is as follows. Catalyzes the formation of GDP-L-fucose from GTP and L-fucose-1-phosphate. Functions as a salvage pathway to reutilize L-fucose arising from the turnover of glycoproteins and glycolipids. This Homo sapiens (Human) protein is Fucose-1-phosphate guanylyltransferase.